The primary structure comprises 345 residues: Dimethyladenosine transferase 1, mitochondrial (345 aa).

A mitochondrion-targeting transit peptide spans 1–27; the sequence is MAASGKLGTFRLPPLPTIREIIKLFGL. Residues L38, G63, E85, K86, D111, V112, and N141 each contribute to the S-adenosyl-L-methionine site.

The protein belongs to the class I-like SAM-binding methyltransferase superfamily. rRNA adenine N(6)-methyltransferase family. KsgA subfamily. As to quaternary structure, interacts with mitochondrial RNA polymerase POLRMT. Interacts with TFAM. Remains bound to the maturing mtSSU until the late stages of assembly. Ubiquitously expressed.

The protein resides in the mitochondrion. The catalysed reaction is adenosine(N)/adenosine(N+1) in rRNA + 4 S-adenosyl-L-methionine = N(6)-dimethyladenosine(N)/N(6)-dimethyladenosine(N+1) in rRNA + 4 S-adenosyl-L-homocysteine + 4 H(+). Functionally, mitochondrial methyltransferase which uses S-adenosyl methionine to dimethylate two highly conserved adjacent adenosine residues (A1006 and A1007) within the loop of helix 45 at the 3-prime end of 12S rRNA, thereby regulating the assembly or stability of the small subunit of the mitochondrial ribosome. Also required for basal transcription of mitochondrial DNA, probably via its interaction with POLRMT and TFAM. Stimulates transcription independently of the methyltransferase activity. The polypeptide is Dimethyladenosine transferase 1, mitochondrial (Tfb1m) (Mus musculus (Mouse)).